The primary structure comprises 346 residues: Protein RecA (346 aa).

Residue 67 to 74 (GPESSGKT) participates in ATP binding.

It belongs to the RecA family.

It localises to the cytoplasm. Can catalyze the hydrolysis of ATP in the presence of single-stranded DNA, the ATP-dependent uptake of single-stranded DNA by duplex DNA, and the ATP-dependent hybridization of homologous single-stranded DNAs. It interacts with LexA causing its activation and leading to its autocatalytic cleavage. The polypeptide is Protein RecA (Saccharopolyspora erythraea (strain ATCC 11635 / DSM 40517 / JCM 4748 / NBRC 13426 / NCIMB 8594 / NRRL 2338)).